The chain runs to 151 residues: 3-hydroxyacyl-[acyl-carrier-protein] dehydratase FabZ (151 aa).

H56 is a catalytic residue.

It belongs to the thioester dehydratase family. FabZ subfamily.

The protein localises to the cytoplasm. The catalysed reaction is a (3R)-hydroxyacyl-[ACP] = a (2E)-enoyl-[ACP] + H2O. Functionally, involved in unsaturated fatty acids biosynthesis. Catalyzes the dehydration of short chain beta-hydroxyacyl-ACPs and long chain saturated and unsaturated beta-hydroxyacyl-ACPs. The sequence is that of 3-hydroxyacyl-[acyl-carrier-protein] dehydratase FabZ from Rhodopseudomonas palustris (strain BisB18).